Here is a 304-residue protein sequence, read N- to C-terminus: Dihydroorotate dehydrogenase B (NAD(+)), catalytic subunit (304 aa).

Residues serine 21 and lysine 45–alanine 46 contribute to the FMN site. Substrate is bound by residues lysine 45 and asparagine 69–leucine 73. 2 residues coordinate FMN: asparagine 99 and asparagine 127. Position 127 (asparagine 127) interacts with substrate. The active-site Nucleophile is the cysteine 130. Lysine 165 and isoleucine 191 together coordinate FMN. Substrate is bound at residue asparagine 192–threonine 193. Residues glycine 217, glycine 243 to glycine 244, and glycine 265 to threonine 266 each bind FMN.

It belongs to the dihydroorotate dehydrogenase family. Type 1 subfamily. As to quaternary structure, heterotetramer of 2 PyrK and 2 PyrD type B subunits. FMN is required as a cofactor.

The protein localises to the cytoplasm. The enzyme catalyses (S)-dihydroorotate + NAD(+) = orotate + NADH + H(+). It functions in the pathway pyrimidine metabolism; UMP biosynthesis via de novo pathway; orotate from (S)-dihydroorotate (NAD(+) route): step 1/1. Catalyzes the conversion of dihydroorotate to orotate with NAD(+) as electron acceptor. The protein is Dihydroorotate dehydrogenase B (NAD(+)), catalytic subunit (pyrD) of Listeria innocua serovar 6a (strain ATCC BAA-680 / CLIP 11262).